Reading from the N-terminus, the 88-residue chain is Small ribosomal subunit protein bS20 (88 aa).

The protein belongs to the bacterial ribosomal protein bS20 family.

Its function is as follows. Binds directly to 16S ribosomal RNA. The polypeptide is Small ribosomal subunit protein bS20 (Bacillus licheniformis (strain ATCC 14580 / DSM 13 / JCM 2505 / CCUG 7422 / NBRC 12200 / NCIMB 9375 / NCTC 10341 / NRRL NRS-1264 / Gibson 46)).